The primary structure comprises 437 residues: Putative O-antigen export protein (437 aa).

12 consecutive transmembrane segments (helical) span residues 3–23 (VPTHIIVAASAWGSRLVSIFI), 41–61 (AVFTVIGSLVGWFLLADFGLG), 81–101 (LVLSAVIAIIPIFILFIILIL), 129–149 (VASFIFLTTSIGNLAYKIWFS), 152–172 (KGWVSNIIPALSSIVGLVFLM), 185–205 (IIFSIYCFYIPAAFFGVISTL), 231–251 (GGFFLFSVLSALVLQVDYIVM), 269–289 (TFGLINFIYAALLQSLWPVCA), 310–330 (FGFIIVIASSFVIFLLKDFIV), 332–352 (ILAPGKDFYFPISLIILFSFY), 375–395 (LWISVPFQAVLSGSLQWVGAV), and 398–418 (GLVGLLCGLIASFLITVSWWL).

It is found in the cell inner membrane. It functions in the pathway bacterial outer membrane biogenesis; LPS O-antigen biosynthesis. Functionally, may be involved in the translocation process of the nascent O-polysaccharide molecules and/or its ligation to lipid A core units. This Yersinia pseudotuberculosis protein is Putative O-antigen export protein (rfbX).